The following is a 240-amino-acid chain: NAD(P)H-quinone oxidoreductase subunit K (240 aa).

Residues Cys-55, Cys-56, Cys-120, and Cys-151 each contribute to the [4Fe-4S] cluster site.

This sequence belongs to the complex I 20 kDa subunit family. NDH-1 can be composed of about 15 different subunits; different subcomplexes with different compositions have been identified which probably have different functions. [4Fe-4S] cluster serves as cofactor.

Its subcellular location is the cellular thylakoid membrane. It catalyses the reaction a plastoquinone + NADH + (n+1) H(+)(in) = a plastoquinol + NAD(+) + n H(+)(out). The catalysed reaction is a plastoquinone + NADPH + (n+1) H(+)(in) = a plastoquinol + NADP(+) + n H(+)(out). NDH-1 shuttles electrons from an unknown electron donor, via FMN and iron-sulfur (Fe-S) centers, to quinones in the respiratory and/or the photosynthetic chain. The immediate electron acceptor for the enzyme in this species is believed to be plastoquinone. Couples the redox reaction to proton translocation, and thus conserves the redox energy in a proton gradient. Cyanobacterial NDH-1 also plays a role in inorganic carbon-concentration. The chain is NAD(P)H-quinone oxidoreductase subunit K from Trichodesmium erythraeum (strain IMS101).